The sequence spans 264 residues: S-adenosylmethionine decarboxylase proenzyme (264 aa).

The active-site Schiff-base intermediate with substrate; via pyruvic acid is serine 112. Residue serine 112 is modified to Pyruvic acid (Ser); by autocatalysis. Histidine 117 serves as the catalytic Proton acceptor; for processing activity. Cysteine 140 serves as the catalytic Proton donor; for catalytic activity.

It belongs to the prokaryotic AdoMetDC family. Type 2 subfamily. In terms of assembly, heterooctamer of four alpha and four beta chains arranged as a tetramer of alpha/beta heterodimers. The cofactor is pyruvate. In terms of processing, is synthesized initially as an inactive proenzyme. Formation of the active enzyme involves a self-maturation process in which the active site pyruvoyl group is generated from an internal serine residue via an autocatalytic post-translational modification. Two non-identical subunits are generated from the proenzyme in this reaction, and the pyruvate is formed at the N-terminus of the alpha chain, which is derived from the carboxyl end of the proenzyme. The post-translation cleavage follows an unusual pathway, termed non-hydrolytic serinolysis, in which the side chain hydroxyl group of the serine supplies its oxygen atom to form the C-terminus of the beta chain, while the remainder of the serine residue undergoes an oxidative deamination to produce ammonia and the pyruvoyl group blocking the N-terminus of the alpha chain.

The catalysed reaction is S-adenosyl-L-methionine + H(+) = S-adenosyl 3-(methylsulfanyl)propylamine + CO2. It functions in the pathway amine and polyamine biosynthesis; S-adenosylmethioninamine biosynthesis; S-adenosylmethioninamine from S-adenosyl-L-methionine: step 1/1. Its function is as follows. Catalyzes the decarboxylation of S-adenosylmethionine to S-adenosylmethioninamine (dcAdoMet), the propylamine donor required for the synthesis of the polyamines spermine and spermidine from the diamine putrescine. The sequence is that of S-adenosylmethionine decarboxylase proenzyme from Yersinia pseudotuberculosis serotype I (strain IP32953).